We begin with the raw amino-acid sequence, 293 residues long: Cytidine deaminase 8 (293 aa).

2 CMP/dCMP-type deaminase domains span residues 20–151 (FTPQ…LISQ) and 181–293 (EHCN…LHCK). Position 61–63 (61–63 (NVE)) interacts with substrate. Residue His74 participates in Zn(2+) binding. Glu76 serves as the catalytic Proton donor. Residues Cys107 and Cys110 each coordinate Zn(2+).

It belongs to the cytidine and deoxycytidylate deaminase family. In terms of assembly, homodimer. The cofactor is Zn(2+).

The enzyme catalyses cytidine + H2O + H(+) = uridine + NH4(+). The catalysed reaction is 2'-deoxycytidine + H2O + H(+) = 2'-deoxyuridine + NH4(+). This enzyme scavenges exogenous and endogenous cytidine and 2'-deoxycytidine for UMP synthesis. The chain is Cytidine deaminase 8 (CDA8) from Arabidopsis thaliana (Mouse-ear cress).